A 248-amino-acid chain; its full sequence is Protein maestro (248 aa).

The segment at 1 to 21 (MDQRQRRILGQPLSIPTSQPK) is disordered. Residues 128–163 (SFFIDITLQTRTLLDDENDSLRYSAFVLFGQLAAFA) form an HEAT repeat.

As to expression, ubiquitous.

The protein localises to the nucleus. It is found in the nucleolus. This Homo sapiens (Human) protein is Protein maestro (MRO).